A 400-amino-acid polypeptide reads, in one-letter code: CCA-adding enzyme (400 aa).

Gly28 and Arg31 together coordinate ATP. Gly28 and Arg31 together coordinate CTP. Positions 41 and 43 each coordinate Mg(2+). ATP-binding residues include Arg112, Asp155, Arg158, Arg161, and Arg164. The CTP site is built by Arg112, Asp155, Arg158, Arg161, and Arg164.

Belongs to the tRNA nucleotidyltransferase/poly(A) polymerase family. Bacterial CCA-adding enzyme type 3 subfamily. In terms of assembly, homodimer. Mg(2+) is required as a cofactor.

The catalysed reaction is a tRNA precursor + 2 CTP + ATP = a tRNA with a 3' CCA end + 3 diphosphate. The enzyme catalyses a tRNA with a 3' CCA end + 2 CTP + ATP = a tRNA with a 3' CCACCA end + 3 diphosphate. Catalyzes the addition and repair of the essential 3'-terminal CCA sequence in tRNAs without using a nucleic acid template. Adds these three nucleotides in the order of C, C, and A to the tRNA nucleotide-73, using CTP and ATP as substrates and producing inorganic pyrophosphate. tRNA 3'-terminal CCA addition is required both for tRNA processing and repair. Also involved in tRNA surveillance by mediating tandem CCA addition to generate a CCACCA at the 3' terminus of unstable tRNAs. While stable tRNAs receive only 3'-terminal CCA, unstable tRNAs are marked with CCACCA and rapidly degraded. The protein is CCA-adding enzyme of Staphylococcus aureus (strain MSSA476).